The primary structure comprises 178 residues: Adenine phosphoribosyltransferase (178 aa).

Belongs to the purine/pyrimidine phosphoribosyltransferase family. In terms of assembly, homodimer.

It localises to the cytoplasm. The catalysed reaction is AMP + diphosphate = 5-phospho-alpha-D-ribose 1-diphosphate + adenine. The protein operates within purine metabolism; AMP biosynthesis via salvage pathway; AMP from adenine: step 1/1. Its function is as follows. Catalyzes a salvage reaction resulting in the formation of AMP, that is energically less costly than de novo synthesis. This is Adenine phosphoribosyltransferase from Cereibacter sphaeroides (strain ATCC 17023 / DSM 158 / JCM 6121 / CCUG 31486 / LMG 2827 / NBRC 12203 / NCIMB 8253 / ATH 2.4.1.) (Rhodobacter sphaeroides).